A 440-amino-acid polypeptide reads, in one-letter code: Aclacinomycin-T 2-deoxy-L-fucose transferase (440 aa).

It catalyses the reaction dTDP-2-deoxy-beta-L-fucose + aclacinomycin T = aclacinomycin S + dTDP + H(+). Functionally, involved in the biosynthesis of the trisaccharide moiety characteristic of the antitumor drug aclacinomycins. In the first reaction, AknK catalyzes the transfer of 2-deoxy-beta-L-fucose from the activated donor dTDP-2-deoxy-beta-L-fucose to the mono-glycosylated aclacinomycin T (rhodosaminyl aklavinone), forming the di-glycosylated aclacinomycin S (L-2-deoxyfucosyl-L-rhodosaminyl aklavinone). It can also catalyze the addition of an alternate dTDP-L-sugar, dTDP-L-daunosamine, to aclacinomycin T and the addition of 2-deoxy-beta-L-fucose to the mono-glycosylated aglycones (monoglycosylated anthracyclines) such as daunomycin (daunorubicin), adriamycin (doxorubicin) and idarubicin. In vitro, AknK also catalyzes the addition of a second L-2-deoxyfucosyl moiety from dTDP-2-deoxy-beta-L-fucose, albeit with reduced activity, to the natural disaccharide chain of aclacinomycin S to produce L-deoxyfucosyl-L-deoxyfucosyl-L-rhodosaminyl aklavinone (2-deoxy-alpha-D-fucosyl-aclacinomycin S), a variant of the natural aclacinomycin A. This is Aclacinomycin-T 2-deoxy-L-fucose transferase from Streptomyces galilaeus.